The sequence spans 465 residues: Glutamate--tRNA ligase 2 (465 aa).

A 'HIGH' region motif is present at residues 8-18 (PSPTGLMHLGN). The 'KMSKS' region motif lies at 249 to 253 (PLSKR). K252 is a binding site for ATP.

This sequence belongs to the class-I aminoacyl-tRNA synthetase family. Glutamate--tRNA ligase type 1 subfamily. In terms of assembly, monomer.

The protein localises to the cytoplasm. The catalysed reaction is tRNA(Glu) + L-glutamate + ATP = L-glutamyl-tRNA(Glu) + AMP + diphosphate. Functionally, catalyzes the attachment of glutamate to tRNA(Glu) in a two-step reaction: glutamate is first activated by ATP to form Glu-AMP and then transferred to the acceptor end of tRNA(Glu). The polypeptide is Glutamate--tRNA ligase 2 (Coxiella burnetii (strain CbuK_Q154) (Coxiella burnetii (strain Q154))).